The chain runs to 729 residues: Leucine-rich repeat flightless-interacting protein 2 (729 aa).

Residues Ile-27 to Trp-69 adopt a coiled-coil conformation. Disordered stretches follow at residues Asp-80–His-156, Ser-230–Ala-268, and Ile-289–Asp-344. Residues His-84–Ser-93 show a composition bias toward basic residues. Residues Val-99–Val-110 show a composition bias toward polar residues. Positions Arg-115–Ser-126 are enriched in basic and acidic residues. Low complexity-rich tracts occupy residues Arg-137–Asp-147 and Ser-257–Ala-268. Residues Thr-304–Ile-320 show a composition bias toward polar residues. 2 coiled-coil regions span residues Asp-357–Lys-531 and Leu-574–Arg-722. Residues Asp-600–Asn-621 are disordered. Residues Ala-607–Pro-616 show a composition bias toward polar residues.

The protein belongs to the LRRFIP family.

Functionally, may function as activator of the canonical Wnt signaling pathway upstream of ctnnb1/beta-catenin. Might be required for dorsal axis formation. The protein is Leucine-rich repeat flightless-interacting protein 2 (lrrfip2) of Xenopus laevis (African clawed frog).